A 163-amino-acid polypeptide reads, in one-letter code: MATEPMTNYGYEKLCAELKNLKEVERPRIVVEIDIARSHGDLKENAEYHAAREKQAFIEARINELGLMLANAQVIDPASLPHNKVSFGSSVKILNLDTDKEFVYTLVGSMESNPSKGLISVSSPIAKALMGKSEGDEVSITLPNGENEFEILEVFYKDIVFEG.

The stretch at 45–65 (NAEYHAAREKQAFIEARINEL) forms a coiled coil.

The protein belongs to the GreA/GreB family.

Its function is as follows. Necessary for efficient RNA polymerase transcription elongation past template-encoded arresting sites. The arresting sites in DNA have the property of trapping a certain fraction of elongating RNA polymerases that pass through, resulting in locked ternary complexes. Cleavage of the nascent transcript by cleavage factors such as GreA or GreB allows the resumption of elongation from the new 3'terminus. GreA releases sequences of 2 to 3 nucleotides. In Helicobacter hepaticus (strain ATCC 51449 / 3B1), this protein is Transcription elongation factor GreA.